The primary structure comprises 599 residues: Elongation factor 4 (599 aa).

The 183-residue stretch at 5–187 (STIRNFAIIA…AIVHRLPAPV (183 aa)) folds into the tr-type G domain. Residues 17-22 (DHGKST) and 134-137 (NKAD) each bind GTP.

Belongs to the TRAFAC class translation factor GTPase superfamily. Classic translation factor GTPase family. LepA subfamily.

Its subcellular location is the cell inner membrane. The enzyme catalyses GTP + H2O = GDP + phosphate + H(+). Its function is as follows. Required for accurate and efficient protein synthesis under certain stress conditions. May act as a fidelity factor of the translation reaction, by catalyzing a one-codon backward translocation of tRNAs on improperly translocated ribosomes. Back-translocation proceeds from a post-translocation (POST) complex to a pre-translocation (PRE) complex, thus giving elongation factor G a second chance to translocate the tRNAs correctly. Binds to ribosomes in a GTP-dependent manner. The protein is Elongation factor 4 of Anaplasma marginale (strain Florida).